The primary structure comprises 585 residues: Potassium-transporting ATPase potassium-binding subunit (585 aa).

Helical transmembrane passes span 25–45 (IIIF…SFYI), 84–104 (YFIN…LVIM), 152–172 (FVIT…SMAF), 194–214 (IFDL…LAGV), 275–295 (LEFV…GIVF), 307–327 (VIMF…YVGV), 345–365 (AIGV…STGA), 368–388 (GALV…LLLN), 397–417 (GVLN…LMVG), 437–457 (LSLV…LMIP), 502–522 (LDGV…LVIA), and 547–567 (LLLI…IIVL).

This sequence belongs to the KdpA family. In terms of assembly, the system is composed of three essential subunits: KdpA, KdpB and KdpC.

Its subcellular location is the cell membrane. Its function is as follows. Part of the high-affinity ATP-driven potassium transport (or Kdp) system, which catalyzes the hydrolysis of ATP coupled with the electrogenic transport of potassium into the cytoplasm. This subunit binds the extracellular potassium ions and delivers the ions to the membrane domain of KdpB through an intramembrane tunnel. This chain is Potassium-transporting ATPase potassium-binding subunit, found in Thermoplasma volcanium (strain ATCC 51530 / DSM 4299 / JCM 9571 / NBRC 15438 / GSS1).